The sequence spans 962 residues: Leucine--tRNA ligase (962 aa).

A 'HIGH' region motif is present at residues 68 to 79; it reads PYPSGAGLHVGH. The interval 559–582 is disordered; sequence DYSPRTFDPDDANTSPETPLSRNE. The span at 570 to 579 shows a compositional bias: polar residues; that stretch reads ANTSPETPLS. The 'KMSKS' region signature appears at 733-737; that stretch reads KMGKS. Residue Lys-736 coordinates ATP.

The protein belongs to the class-I aminoacyl-tRNA synthetase family.

The protein resides in the cytoplasm. The catalysed reaction is tRNA(Leu) + L-leucine + ATP = L-leucyl-tRNA(Leu) + AMP + diphosphate. The polypeptide is Leucine--tRNA ligase (Streptomyces avermitilis (strain ATCC 31267 / DSM 46492 / JCM 5070 / NBRC 14893 / NCIMB 12804 / NRRL 8165 / MA-4680)).